Consider the following 1106-residue polypeptide: Carbamoyl phosphate synthase large chain (1106 aa).

The interval Met1–Glu401 is carboxyphosphate synthetic domain. The ATP site is built by Arg129, Arg169, Gly175, Gly176, Arg208, Val210, Glu215, Gly241, Val242, His243, Gln284, and Glu298. In terms of domain architecture, ATP-grasp 1 spans Lys133–Ile327. Mg(2+) is bound by residues Gln284, Glu298, and Asn300. Mn(2+) contacts are provided by Gln284, Glu298, and Asn300. Positions Ile402–Ala577 are oligomerization domain. A carbamoyl phosphate synthetic domain region spans residues Ile578–Gly964. Residues Asp706–Met896 form the ATP-grasp 2 domain. 10 residues coordinate ATP: Arg742, Gln781, Leu783, Glu787, Gly812, Val813, His814, Ser815, Gln855, and Glu867. Gln855, Glu867, and Asn869 together coordinate Mg(2+). Mn(2+)-binding residues include Gln855, Glu867, and Asn869. The MGS-like domain occupies Phe965–Asn1106. Residues Phe965 to Asn1106 are allosteric domain.

The protein belongs to the CarB family. Composed of two chains; the small (or glutamine) chain promotes the hydrolysis of glutamine to ammonia, which is used by the large (or ammonia) chain to synthesize carbamoyl phosphate. Tetramer of heterodimers (alpha,beta)4. Mg(2+) is required as a cofactor. It depends on Mn(2+) as a cofactor.

It catalyses the reaction hydrogencarbonate + L-glutamine + 2 ATP + H2O = carbamoyl phosphate + L-glutamate + 2 ADP + phosphate + 2 H(+). The enzyme catalyses hydrogencarbonate + NH4(+) + 2 ATP = carbamoyl phosphate + 2 ADP + phosphate + 2 H(+). It participates in amino-acid biosynthesis; L-arginine biosynthesis; carbamoyl phosphate from bicarbonate: step 1/1. Its pathway is pyrimidine metabolism; UMP biosynthesis via de novo pathway; (S)-dihydroorotate from bicarbonate: step 1/3. Functionally, large subunit of the glutamine-dependent carbamoyl phosphate synthetase (CPSase). CPSase catalyzes the formation of carbamoyl phosphate from the ammonia moiety of glutamine, carbonate, and phosphate donated by ATP, constituting the first step of 2 biosynthetic pathways, one leading to arginine and/or urea and the other to pyrimidine nucleotides. The large subunit (synthetase) binds the substrates ammonia (free or transferred from glutamine from the small subunit), hydrogencarbonate and ATP and carries out an ATP-coupled ligase reaction, activating hydrogencarbonate by forming carboxy phosphate which reacts with ammonia to form carbamoyl phosphate. The protein is Carbamoyl phosphate synthase large chain of Natranaerobius thermophilus (strain ATCC BAA-1301 / DSM 18059 / JW/NM-WN-LF).